A 143-amino-acid chain; its full sequence is Competence protein ComGD (143 aa).

A propeptide spanning residues 1 to 10 is cleaved from the precursor; sequence MNIKLNEEKG. Phenylalanine 11 bears the N-methylphenylalanine mark. A helical membrane pass occupies residues 11 to 31; the sequence is FTLLESLLVLSLASILLVAVF.

In terms of assembly, the transformation pili are flexible filaments, consisting mainly of the major pilin ComGC and smaller amounts of the minor pilins, including at least ComGD, ComGF and ComGG. Interacts with ComGF. Interacts with ComGG. Post-translationally, processing of ComGD in competent cells requires ComC.

It localises to the cell membrane. The protein localises to the cell surface. Functionally, required for formation of the type IV-like pilus (T4P) that plays a role in transformation. Transformation pili are dynamically extended and retracted, perhaps thereby promoting DNA uptake and transformation. Required for transformation and DNA binding. The sequence is that of Competence protein ComGD (comGD) from Bacillus subtilis (strain 168).